A 352-amino-acid polypeptide reads, in one-letter code: UDP-N-acetylglucosamine--N-acetylmuramyl-(pentapeptide) pyrophosphoryl-undecaprenol N-acetylglucosamine transferase 2 (352 aa).

Residues 11 to 13 (SAG), Arg164, Ser194, and Gln289 each bind UDP-N-acetyl-alpha-D-glucosamine.

The protein belongs to the glycosyltransferase 28 family. MurG subfamily.

It is found in the cell membrane. It catalyses the reaction di-trans,octa-cis-undecaprenyl diphospho-N-acetyl-alpha-D-muramoyl-L-alanyl-D-glutamyl-meso-2,6-diaminopimeloyl-D-alanyl-D-alanine + UDP-N-acetyl-alpha-D-glucosamine = di-trans,octa-cis-undecaprenyl diphospho-[N-acetyl-alpha-D-glucosaminyl-(1-&gt;4)]-N-acetyl-alpha-D-muramoyl-L-alanyl-D-glutamyl-meso-2,6-diaminopimeloyl-D-alanyl-D-alanine + UDP + H(+). It functions in the pathway cell wall biogenesis; peptidoglycan biosynthesis. In terms of biological role, cell wall formation. Catalyzes the transfer of a GlcNAc subunit on undecaprenyl-pyrophosphoryl-MurNAc-pentapeptide (lipid intermediate I) to form undecaprenyl-pyrophosphoryl-MurNAc-(pentapeptide)GlcNAc (lipid intermediate II). The polypeptide is UDP-N-acetylglucosamine--N-acetylmuramyl-(pentapeptide) pyrophosphoryl-undecaprenol N-acetylglucosamine transferase 2 (Bacillus cereus (strain ATCC 10987 / NRS 248)).